We begin with the raw amino-acid sequence, 209 residues long: Potassium-transporting ATPase KdpC subunit (209 aa).

The helical transmembrane segment at 10–30 threads the bilayer; that stretch reads VISLVFLFVLGFLFPTVTSLI.

The protein belongs to the KdpC family. In terms of assembly, the system is composed of three essential subunits: KdpA, KdpB and KdpC.

It localises to the cell membrane. In terms of biological role, part of the high-affinity ATP-driven potassium transport (or Kdp) system, which catalyzes the hydrolysis of ATP coupled with the electrogenic transport of potassium into the cytoplasm. This subunit acts as a catalytic chaperone that increases the ATP-binding affinity of the ATP-hydrolyzing subunit KdpB by the formation of a transient KdpB/KdpC/ATP ternary complex. In Thermoplasma volcanium (strain ATCC 51530 / DSM 4299 / JCM 9571 / NBRC 15438 / GSS1), this protein is Potassium-transporting ATPase KdpC subunit.